Consider the following 339-residue polypeptide: Dihydroorotate dehydrogenase (quinone) (339 aa).

FMN is bound by residues 62–66 and threonine 86; that span reads AGMDK. A substrate-binding site is contributed by lysine 66. 111 to 115 lines the substrate pocket; it reads NRMGF. 2 residues coordinate FMN: asparagine 139 and asparagine 172. Asparagine 172 provides a ligand contact to substrate. Serine 175 functions as the Nucleophile in the catalytic mechanism. Asparagine 177 provides a ligand contact to substrate. Residues lysine 217 and threonine 245 each coordinate FMN. A substrate-binding site is contributed by 246-247; it reads NT. FMN is bound by residues glycine 268, glycine 297, and 318 to 319; that span reads YS.

Belongs to the dihydroorotate dehydrogenase family. Type 2 subfamily. Monomer. It depends on FMN as a cofactor.

The protein resides in the cell membrane. It carries out the reaction (S)-dihydroorotate + a quinone = orotate + a quinol. The protein operates within pyrimidine metabolism; UMP biosynthesis via de novo pathway; orotate from (S)-dihydroorotate (quinone route): step 1/1. In terms of biological role, catalyzes the conversion of dihydroorotate to orotate with quinone as electron acceptor. This chain is Dihydroorotate dehydrogenase (quinone), found in Shewanella sediminis (strain HAW-EB3).